The chain runs to 459 residues: MHNIHRRNFLKAAGAATAGLVTANIALNAYASSVAPKPQAGKSVIGLIAPKMDVVRVGFIGVGERGFSHVEQFCHLEGVELKAICDTHQAVLDRAVDHIVKQNRPKPAVYTGNDLSYRDLLSRDDIDIVIISTPWEWHAPMAIETMESGKHAFVEVPMALTVEECWQVVDTAERTQKNCMMMENVNYGREELMVLNMVRQGVFGELLHGEAAYIHELRWQMKEIDHKTGSWRTYWHTKRNGNLYPTHGLGPVSQYMNINRGDRFDYLTSMSSPALGRALYAKREFPADHERNQLKYINGDINTSLIKTVKGRTIMVQHDTTTPRPYSRHNLIQGTNGVFAGFPNRIAVENGGFGQSYHEWDMDMQKWYDKYDHPLWQRIGKEAEINGGHGGMDFVMLWRMIYCLRNGEALDQDVYDGASWSVVNILSEHSLNDRSNSVTFPDFTRGAWQTAKPLGIVGA.

A signal peptide (tat-type signal) is located at residues 1–31 (MHNIHRRNFLKAAGAATAGLVTANIALNAYA). Residues 64 to 65 (ER), Asp-86, 135 to 138 (WEWH), 155 to 156 (EV), and Asn-184 each bind NAD(+). Substrate is bound by residues Tyr-213, Arg-232, 244-247 (YPTH), and Tyr-326. NAD(+) is bound at residue Tyr-244.

This sequence belongs to the Gfo/Idh/MocA family. Glycosyl hydrolase 109 subfamily. NAD(+) is required as a cofactor. Predicted to be exported by the Tat system. The position of the signal peptide cleavage has not been experimentally proven.

Functionally, glycosidase. The sequence is that of Glycosyl hydrolase family 109 protein from Shewanella baltica (strain OS155 / ATCC BAA-1091).